The sequence spans 180 residues: MELKSTLLDDKAIKRTLIRISHEIIERNKGIEDIVLIGIKRRGYPLAQRIAEHIEGIEGSKVDVGYVDITLYRDDLTIVEKDPTVKSIDIETTIKDKKVILVDDVLYTCRTVRAAIDAVMDLDRPEGIQLAVLIDRGHKELPIRADYVGKNIPTSKNEVIKVMLNEIDGEDSVKIYDSIN.

The short motif at 99–111 (VILVDDVLYTCRT) is the PRPP-binding element.

The protein belongs to the purine/pyrimidine phosphoribosyltransferase family. PyrR subfamily. Homodimer and homohexamer; in equilibrium.

The catalysed reaction is UMP + diphosphate = 5-phospho-alpha-D-ribose 1-diphosphate + uracil. Functionally, regulates transcriptional attenuation of the pyrimidine nucleotide (pyr) operon by binding in a uridine-dependent manner to specific sites on pyr mRNA. This disrupts an antiterminator hairpin in the RNA and favors formation of a downstream transcription terminator, leading to a reduced expression of downstream genes. In terms of biological role, also displays a weak uracil phosphoribosyltransferase activity which is not physiologically significant. The chain is Bifunctional protein PyrR from Clostridium botulinum (strain Eklund 17B / Type B).